The sequence spans 345 residues: Putative RING-H2 finger protein ATL36 (345 aa).

Positions 1 to 31 (MNIFTRYHLPRVVSGVILPLFLFHLLPYVTC) are cleaved as a signal peptide. The helical transmembrane segment at 50–70 (SIIAIVVLAIFISLGMVSCCL) threads the bilayer. The segment at 123 to 165 (CAICLSEFEDQETLRWMPPCSHTFHANCIDVWLSSWSTCPVCR) adopts an RING-type; atypical zinc-finger fold. Serine 264 bears the Phosphoserine mark.

This sequence belongs to the RING-type zinc finger family. ATL subfamily.

It localises to the membrane. It carries out the reaction S-ubiquitinyl-[E2 ubiquitin-conjugating enzyme]-L-cysteine + [acceptor protein]-L-lysine = [E2 ubiquitin-conjugating enzyme]-L-cysteine + N(6)-ubiquitinyl-[acceptor protein]-L-lysine.. The protein operates within protein modification; protein ubiquitination. This chain is Putative RING-H2 finger protein ATL36 (ATL36), found in Arabidopsis thaliana (Mouse-ear cress).